Here is a 142-residue protein sequence, read N- to C-terminus: ATP synthase epsilon chain (142 aa).

Belongs to the ATPase epsilon chain family. As to quaternary structure, F-type ATPases have 2 components, CF(1) - the catalytic core - and CF(0) - the membrane proton channel. CF(1) has five subunits: alpha(3), beta(3), gamma(1), delta(1), epsilon(1). CF(0) has three main subunits: a, b and c.

It is found in the cell inner membrane. In terms of biological role, produces ATP from ADP in the presence of a proton gradient across the membrane. This is ATP synthase epsilon chain from Shewanella pealeana (strain ATCC 700345 / ANG-SQ1).